The primary structure comprises 172 residues: Stellate protein CG33238 (172 aa).

The protein belongs to the casein kinase 2 subunit beta family. In terms of assembly, interacts in vitro with the casein kinase 2 alpha subunit (CkII-alpha). The relevance of such interaction is however unclear in vivo. Probably not expressed in wild-type flies. In males lacking the Y chromosome, it is testis-specific and constitutes the main component of star-shaped crystals.

Its function is as follows. Unknown. In males lacking the Y chromosome, its strong overexpression leads to the appearance of proteinaceous star-shaped crystals in the primary spermatocytes causing meiotic drive, possibly by interfering with normal casein kinase 2 activity. This is Stellate protein CG33238 (Ste:CG33238) from Drosophila melanogaster (Fruit fly).